Reading from the N-terminus, the 127-residue chain is Large ribosomal subunit protein eL18 (127 aa).

Belongs to the eukaryotic ribosomal protein eL18 family.

The protein is Large ribosomal subunit protein eL18 of Methanopyrus kandleri (strain AV19 / DSM 6324 / JCM 9639 / NBRC 100938).